Reading from the N-terminus, the 129-residue chain is Small ribosomal subunit protein uS11c (129 aa).

The protein belongs to the universal ribosomal protein uS11 family. In terms of assembly, part of the 30S ribosomal subunit.

It localises to the plastid. Its subcellular location is the chloroplast. The polypeptide is Small ribosomal subunit protein uS11c (Cyanidium caldarium (Red alga)).